We begin with the raw amino-acid sequence, 96 residues long: Acylphosphatase (96 aa).

In terms of domain architecture, Acylphosphatase-like spans 4 to 96 (RCEFLIFGKV…ESLNDFEILR (93 aa)). Residues R19 and N42 contribute to the active site.

It belongs to the acylphosphatase family.

The enzyme catalyses an acyl phosphate + H2O = a carboxylate + phosphate + H(+). The sequence is that of Acylphosphatase (acyP) from Helicobacter hepaticus (strain ATCC 51449 / 3B1).